The chain runs to 581 residues: uncharacterized protein (581 aa).

The residue at position 28 (serine 28) is a Phosphoserine. The next 11 membrane-spanning stretches (helical) occupy residues leucine 61–alanine 81, alanine 100–leucine 120, cysteine 125–lysine 145, isoleucine 187–alanine 207, tryptophan 214–phenylalanine 234, isoleucine 340–leucine 360, alanine 382–glycine 402, leucine 426–glycine 446, valine 458–leucine 478, valine 486–phenylalanine 506, and isoleucine 522–glycine 542.

The protein belongs to the major facilitator superfamily.

Its subcellular location is the cytoplasm. It is found in the cell cortex. The protein resides in the membrane. This is an uncharacterized protein from Schizosaccharomyces pombe (strain 972 / ATCC 24843) (Fission yeast).